Consider the following 161-residue polypeptide: Allophycocyanin subunit alpha-B (161 aa).

An N4-methylasparagine modification is found at asparagine 71. Residue cysteine 81 coordinates (2R,3E)-phycocyanobilin.

Belongs to the phycobiliprotein family. As to quaternary structure, heterodimer of an alpha-B and a beta chain forming AP-B. In terms of processing, contains one covalently linked bilin chromophore. The chromophore is added by phycocyanobilin lyase CpcUS.

It localises to the cellular thylakoid membrane. A variant alpha-allophycocyanin (AP) which forms a complex with beta-AP with maximum absorption at approximately 670 nanometers. It is an important phycobilisome terminal emitter involved in energy transfer to photosystem I. In Picosynechococcus sp. (strain ATCC 27264 / PCC 7002 / PR-6) (Agmenellum quadruplicatum), this protein is Allophycocyanin subunit alpha-B (apcD).